We begin with the raw amino-acid sequence, 192 residues long: Mediator of RNA polymerase II transcription subunit 29 (192 aa).

The segment at M32 to Q51 is disordered.

This sequence belongs to the Mediator complex subunit 29 family. In terms of assembly, component of the Mediator complex.

It localises to the nucleus. Its function is as follows. Component of the Mediator complex, a coactivator involved in the regulated transcription of nearly all RNA polymerase II-dependent genes. Mediator functions as a bridge to convey information from gene-specific regulatory proteins to the basal RNA polymerase II transcription machinery. Mediator is recruited to promoters by direct interactions with regulatory proteins and serves as a scaffold for the assembly of a functional preinitiation complex with RNA polymerase II and the general transcription factors. The polypeptide is Mediator of RNA polymerase II transcription subunit 29 (ix) (Bombyx mori (Silk moth)).